Here is a 486-residue protein sequence, read N- to C-terminus: Malonate-semialdehyde dehydrogenase 2 (486 aa).

NAD(+)-binding residues include Phe-154, Lys-178, Glu-181, Arg-182, and Ser-231. Cys-286 serves as the catalytic Nucleophile. Position 385 (Glu-385) interacts with NAD(+).

Belongs to the aldehyde dehydrogenase family. IolA subfamily. In terms of assembly, homotetramer.

It catalyses the reaction 3-oxopropanoate + NAD(+) + CoA + H2O = hydrogencarbonate + acetyl-CoA + NADH + H(+). The catalysed reaction is 2-methyl-3-oxopropanoate + NAD(+) + CoA + H2O = propanoyl-CoA + hydrogencarbonate + NADH + H(+). It functions in the pathway polyol metabolism; myo-inositol degradation into acetyl-CoA; acetyl-CoA from myo-inositol: step 7/7. Functionally, catalyzes the oxidation of malonate semialdehyde (MSA) and methylmalonate semialdehyde (MMSA) into acetyl-CoA and propanoyl-CoA, respectively. Is involved in a myo-inositol catabolic pathway. Bicarbonate, and not CO2, is the end-product of the enzymatic reaction. The chain is Malonate-semialdehyde dehydrogenase 2 from Shouchella clausii (strain KSM-K16) (Alkalihalobacillus clausii).